The chain runs to 243 residues: Phosphoribosyl isomerase A (243 aa).

Aspartate 9 acts as the Proton acceptor in catalysis. Aspartate 128 serves as the catalytic Proton donor.

This sequence belongs to the HisA/HisF family.

The protein resides in the cytoplasm. The catalysed reaction is 1-(5-phospho-beta-D-ribosyl)-5-[(5-phospho-beta-D-ribosylamino)methylideneamino]imidazole-4-carboxamide = 5-[(5-phospho-1-deoxy-D-ribulos-1-ylimino)methylamino]-1-(5-phospho-beta-D-ribosyl)imidazole-4-carboxamide. It carries out the reaction N-(5-phospho-beta-D-ribosyl)anthranilate = 1-(2-carboxyphenylamino)-1-deoxy-D-ribulose 5-phosphate. It participates in amino-acid biosynthesis; L-histidine biosynthesis; L-histidine from 5-phospho-alpha-D-ribose 1-diphosphate: step 4/9. Its pathway is amino-acid biosynthesis; L-tryptophan biosynthesis; L-tryptophan from chorismate: step 3/5. Its function is as follows. Involved in both the histidine and tryptophan biosynthetic pathways. This is Phosphoribosyl isomerase A from Mycobacterium avium (strain 104).